The primary structure comprises 296 residues: Protein FAM110A (296 aa).

2 disordered regions span residues 61–97 (NTRQ…PCSG) and 117–192 (PVSP…KSDL). 2 stretches are compositionally biased toward pro residues: residues 139–148 (PATPPRPPPS) and 161–170 (PASPARPYPS).

This sequence belongs to the FAM110 family. As to quaternary structure, may interact with CSPP1.

The protein resides in the cytoplasm. The protein localises to the cytoskeleton. It is found in the microtubule organizing center. Its subcellular location is the centrosome. It localises to the spindle pole. This is Protein FAM110A (Fam110a) from Mus musculus (Mouse).